Consider the following 333-residue polypeptide: Biotin synthase (333 aa).

The Radical SAM core domain maps to 46–275 (YYGKKVKLNM…TKEIRISGGR (230 aa)). Residues Cys64, Cys68, and Cys71 each coordinate [4Fe-4S] cluster. Residues Cys108, Cys140, Cys200, and Arg270 each contribute to the [2Fe-2S] cluster site.

Belongs to the radical SAM superfamily. Biotin synthase family. As to quaternary structure, homodimer. [4Fe-4S] cluster serves as cofactor. The cofactor is [2Fe-2S] cluster.

It carries out the reaction (4R,5S)-dethiobiotin + (sulfur carrier)-SH + 2 reduced [2Fe-2S]-[ferredoxin] + 2 S-adenosyl-L-methionine = (sulfur carrier)-H + biotin + 2 5'-deoxyadenosine + 2 L-methionine + 2 oxidized [2Fe-2S]-[ferredoxin]. The protein operates within cofactor biosynthesis; biotin biosynthesis; biotin from 7,8-diaminononanoate: step 2/2. Catalyzes the conversion of dethiobiotin (DTB) to biotin by the insertion of a sulfur atom into dethiobiotin via a radical-based mechanism. In Halalkalibacterium halodurans (strain ATCC BAA-125 / DSM 18197 / FERM 7344 / JCM 9153 / C-125) (Bacillus halodurans), this protein is Biotin synthase.